The primary structure comprises 5405 residues: IgGFc-binding protein (5405 aa).

An N-terminal signal peptide occupies residues Met-1–Glu-23. Residues Ala-24–Ala-450 form an igGFc-binding region. Residues Asn-75 and Asn-91 are each glycosylated (N-linked (GlcNAc...) asparagine). One can recognise a VWFD 1 domain in the interval Ala-470–Glu-650. Disulfide bonds link Cys-472–Cys-611 and Cys-494–Cys-649. The TIL 1 domain occupies Cys-745–Cys-799. Positions Gly-862 to Gly-1041 constitute a VWFD 2 domain. Cystine bridges form between Cys-864–Cys-1003 and Cys-886–Cys-1040. Positions Cys-1136–Cys-1189 constitute a TIL 2 domain. The VWFD 3 domain occupies Ser-1250–Leu-1429. 2 cysteine pairs are disulfide-bonded: Cys-1252–Cys-1390 and Cys-1274–Cys-1428. Residue Asn-1317 is glycosylated (N-linked (GlcNAc...) (complex) asparagine). The region spanning Cys-1532 to Cys-1585 is the TIL 3 domain. Residues Ala-1671–Trp-1854 enclose the VWFD 4 domain. Intrachain disulfides connect Cys-1673-Cys-1815, Cys-1695-Cys-1853, and Cys-1704-Cys-1812. Asn-1743 carries an N-linked (GlcNAc...) asparagine glycan. In terms of domain architecture, TIL 4 spans Cys-1950–Cys-2007. Residues Ala-2070–Thr-2253 enclose the VWFD 5 domain. 2 disulfide bridges follow: Cys-2072-Cys-2211 and Cys-2094-Cys-2252. The N-linked (GlcNAc...) asparagine glycan is linked to Asn-2138. Residues Cys-2337–Cys-2390 enclose the TIL 5 domain. The VWFD 6 domain maps to Thr-2451–Leu-2630. 2 cysteine pairs are disulfide-bonded: Cys-2453/Cys-2591 and Cys-2475/Cys-2629. Asn-2518 is a glycosylation site (N-linked (GlcNAc...) asparagine). Residues Cys-2733 to Cys-2786 enclose the TIL 6 domain. Positions Ala-2872–Trp-3055 constitute a VWFD 7 domain. 3 cysteine pairs are disulfide-bonded: Cys-2874–Cys-3016, Cys-2896–Cys-3054, and Cys-2905–Cys-3013. The TIL 7 domain maps to Cys-3151–Cys-3208. One can recognise a VWFD 8 domain in the interval Ala-3271–Thr-3454. Cystine bridges form between Cys-3273–Cys-3412 and Cys-3295–Cys-3453. Positions Cys-3538–Cys-3591 constitute a TIL 8 domain. A VWFD 9 domain is found at Thr-3652–Leu-3831. 2 cysteine pairs are disulfide-bonded: Cys-3654–Cys-3792 and Cys-3676–Cys-3830. N-linked (GlcNAc...) asparagine glycosylation is present at Asn-3719. One can recognise a TIL 9 domain in the interval Cys-3934–Cys-3987. Residues Ala-4073–Trp-4256 form the VWFD 10 domain. 3 disulfides stabilise this stretch: Cys-4075–Cys-4217, Cys-4097–Cys-4255, and Cys-4106–Cys-4214. Asn-4145 carries an N-linked (GlcNAc...) asparagine glycan. Residues Cys-4352 to Cys-4409 form the TIL 10 domain. Residues Ala-4472–Thr-4655 enclose the VWFD 11 domain. Disulfide bonds link Cys-4474–Cys-4613 and Cys-4496–Cys-4654. Asn-4540 carries an N-linked (GlcNAc...) asparagine glycan. In terms of domain architecture, TIL 11 spans Cys-4739–Cys-4792. The VWFD 12 domain maps to Gly-4854–Gly-5025. Cystine bridges form between Cys-4856–Cys-4986 and Cys-4878–Cys-5024. The 54-residue stretch at Cys-5121 to Cys-5174 folds into the TIL 12 domain. Positions Gly-5233–Tyr-5404 constitute a VWFD 13 domain. A disulfide bridge links Cys-5235 with Cys-5372.

Interacts with the Fc portion of IgG and with MUC2. In terms of tissue distribution, mainly expressed in placenta and colon epithelium. Expressed in thyroid, and down-regulated in thyroid carcinomas. Present in serum, with higher levels in patients with various autoimmune diseases (at protein level).

It is found in the secreted. Its function is as follows. May be involved in the maintenance of the mucosal structure as a gel-like component of the mucosa. The polypeptide is IgGFc-binding protein (FCGBP) (Homo sapiens (Human)).